Reading from the N-terminus, the 137-residue chain is DNA-binding protein H-NS (137 aa).

The stretch at 13-65 (TLRAQARECTLETLEEMLEKLEVVVNERREEESAAAAEVEERTRKLQQYREML) forms a coiled coil. A DNA-binding region spans residues 112–117 (QGRTPA).

It belongs to the histone-like protein H-NS family. As to quaternary structure, homodimer that oligomerizes on DNA into higher-order complexes that form bridges between disparate regions of DNA compacting it. Interacts with Hha, YdgT and StpA.

The protein localises to the cytoplasm. It localises to the nucleoid. Its function is as follows. A DNA-binding protein implicated in transcriptional repression and chromosome organization and compaction. Binds AT-rich DNA, repressing its transcription; about 754/4438 tested genes (15%) bind to H-NS, 70% of these are AT-rich and correspond to horizontally transferred geness (HTG), thus playing a central role in silencing foreign genes. This offers the selective advantage of silencing foreign DNA. Binds nucleation sites in AT-rich DNA and bridges them, forming higher-order nucleoprotein complexes and condensing the chromosome. A subset of genes are repressed by H-NS in association with Hha and/or YdgT. The chain is DNA-binding protein H-NS (hns) from Salmonella typhimurium (strain 14028s / SGSC 2262).